A 339-amino-acid polypeptide reads, in one-letter code: Arylacetonitrilase (339 aa).

A CN hydrolase domain is found at 5 to 290; that stretch reads IRVAVTQAEP…EGIVYADLDL (286 aa). E45 (proton acceptor) is an active-site residue. K126 is an active-site residue. The active-site Nucleophile is C167.

Belongs to the carbon-nitrogen hydrolase superfamily. Nitrilase family.

It carries out the reaction a nitrile + 2 H2O = a carboxylate + NH4(+). The catalysed reaction is 4-chlorophenylacetonitrile + 2 H2O = 4-chlorophenylacetate + NH4(+). In terms of biological role, nitrilase that hydrolyzes preferentially phenylacetonitrile, (R,S)-mandelonitrile, and 3-indolylacetonitrile. The sequence is that of Arylacetonitrilase from Fusarium vanettenii (strain ATCC MYA-4622 / CBS 123669 / FGSC 9596 / NRRL 45880 / 77-13-4) (Fusarium solani subsp. pisi).